We begin with the raw amino-acid sequence, 184 residues long: GTP-binding protein Rheb (184 aa).

K8 is covalently cross-linked (Glycyl lysine isopeptide (Lys-Gly) (interchain with G-Cter in ubiquitin)). Residues S16 and V17 each contribute to the GDP site. S16 is a GTP binding site. Residues G18, K19, S20, S21, V32, Y35, T38, N119, and D122 each contribute to the GTP site. K19, S20, and S21 together coordinate GDP. S20 serves as a coordination point for Mg(2+). The Effector region signature appears at Y35–F43. A GDP-binding site is contributed by T38. A Mg(2+)-binding site is contributed by T38. D122 serves as a coordination point for GDP. Residue S130 is modified to Phosphoserine; by MAPKAPK5. A150 contacts GDP. A150 serves as a coordination point for GTP. C181 carries the post-translational modification Cysteine methyl ester. A lipid anchor (S-farnesyl cysteine) is attached at C181. The propeptide at S182–M184 is removed in mature form.

It belongs to the small GTPase superfamily. Rheb family. As to quaternary structure, associates with the mTORC1 complex (MTOR, MLST8 and RPTOR) in a guanyl nucleotide-independent manner. Interacts with TSC2. Interacts with MCRS1; the interaction maintains RHEB at the lysosome in its active GTP-bound form and prevents its interaction with the mTORC1 complex inhibitor TSC2, ensuring activation of the mTORC1 complex by RHEB. Interacts (when prenylated) with PDE6D; this promotes release from membranes. Post-translationally, farnesylation is important for efficiently activating mTORC1-mediated signaling. Polyubiquitinated in response to amino acid, promoting its interaction with MTOR and mTORC1 activation. Deubiquitination by ATXN3 promotes recruitment of the TSC-TBC complex and RHEB inactivation by TSC2. Monoubiquitinated at Lys-8 by RNF152, promoting its association with the TSC-TBC complex. Deubiquitinated at Lys-8 by USP4, promoting mTORC1 activation. In terms of processing, phosphorylation by MAPKAPK5 impairs GTP-binding and inactivation. In terms of tissue distribution, expressed at high levels in normal adult cortex as well as a number of peripheral tissues, including lung and intestine.

It is found in the endomembrane system. Its subcellular location is the lysosome membrane. It localises to the golgi apparatus membrane. The protein resides in the endoplasmic reticulum membrane. The protein localises to the cytoplasm. It is found in the cytosol. It carries out the reaction GTP + H2O = GDP + phosphate + H(+). Its activity is regulated as follows. Alternates between an inactive form bound to GDP and an active form bound to GTP. Inactivated by the TSC-TBC complex via the GTPase activating protein (GAP) domain of TSC2. Autoinhibited by Tyr-35, which constrains the active site conformation, restricting the access of the catalytic Asp-65 to the nucleotide-binding pocket. Small GTPase that acts as an allosteric activator of the canonical mTORC1 complex, an evolutionarily conserved central nutrient sensor that stimulates anabolic reactions and macromolecule biosynthesis to promote cellular biomass generation and growth. In response to nutrients, growth factors or amino acids, specifically activates the protein kinase activity of MTOR, the catalytic component of the mTORC1 complex: acts by causing a conformational change that allows the alignment of residues in the active site of MTOR, thereby enhancing the phosphorylation of ribosomal protein S6 kinase (RPS6KB1 and RPS6KB2) and EIF4EBP1 (4E-BP1). RHEB is also required for localization of the TSC-TBC complex to lysosomal membranes. In response to starvation, RHEB is inactivated by the TSC-TBC complex, preventing activation of mTORC1. Has low intrinsic GTPase activity. The sequence is that of GTP-binding protein Rheb from Rattus norvegicus (Rat).